Consider the following 765-residue polypeptide: 1,4-alpha-glucan branching enzyme GlgB (765 aa).

Asp-431 acts as the Nucleophile in catalysis. Glu-484 functions as the Proton donor in the catalytic mechanism.

This sequence belongs to the glycosyl hydrolase 13 family. GlgB subfamily. Monomer.

It carries out the reaction Transfers a segment of a (1-&gt;4)-alpha-D-glucan chain to a primary hydroxy group in a similar glucan chain.. The protein operates within glycan biosynthesis; glycogen biosynthesis. Catalyzes the formation of the alpha-1,6-glucosidic linkages in glycogen by scission of a 1,4-alpha-linked oligosaccharide from growing alpha-1,4-glucan chains and the subsequent attachment of the oligosaccharide to the alpha-1,6 position. The sequence is that of 1,4-alpha-glucan branching enzyme GlgB from Synechococcus sp. (strain CC9605).